We begin with the raw amino-acid sequence, 442 residues long: MSTEQDAVLGLAKDLEGINLLTVPNLERGHQSKLCKEKTTSDSSSSRKPSQQRDNYRKRRPKLICIPYTSFLHTGMHNFLTKPPRDIFHESKEVALFTNGRAYTILRKDLIPNLKESIAELYESSLLEAKKRKVPYLGHDLFANIDEFVPMTISELDSVSPCFSYIENWILDNPGKDFKIGKKFTVVTTRHHIVDLTMHLFNRRNRQTSLIVTYMGAGLLSFCRNVKKDSQMSKEGIYSNDPNMKKICYSGFEFENWVTENSKVADLTGSKCPIFSLVESKLSEEIGLLIRCEMDAFNPVSETNTELKCFAPLSMHNSNHRRKLLKTWVQTGLLPNSDIMIGLRDSHSGQLLDIQWYSRDLLCKKFNHPGLPTNKKELNYNAQIAVEWCHYCIEAICKLVEANISDYSSTKPESFEIGIDTNNAIVITKLKTTPRNVELFGM.

Residues 31 to 40 (QSKLCKEKTT) are compositionally biased toward basic and acidic residues. The tract at residues 31–56 (QSKLCKEKTTSDSSSSRKPSQQRDNY) is disordered. Residues 41–53 (SDSSSSRKPSQQR) are compositionally biased toward low complexity. Arginine 101 is a binding site for substrate. Residue glutamate 255 coordinates a divalent metal cation. Glutamate 293 provides a ligand contact to substrate. Residues aspartate 295, glutamate 306, and leucine 307 each coordinate a divalent metal cation. 2 residues coordinate substrate: lysine 308 and glutamine 330.

This sequence belongs to the DXO/Dom3Z family. A divalent metal cation is required as a cofactor.

Its subcellular location is the cytoplasm. It carries out the reaction a 5'-end NAD(+)-phospho-ribonucleoside in mRNA + H2O = a 5'-end phospho-ribonucleoside in mRNA + NAD(+) + H(+). The catalysed reaction is a 5'-end (N(7)-methyl 5'-triphosphoguanosine)-ribonucleoside-ribonucleotide in mRNA + H2O = a (N(7)-methyl 5'-triphosphoguanosine)-nucleoside + a 5'-end phospho-ribonucleoside in mRNA + H(+). Its function is as follows. Decapping enzyme for NAD-capped RNAs: specifically hydrolyzes the nicotinamide adenine dinucleotide (NAD) cap from a subset of RNAs by removing the entire NAD moiety from the 5'-end of an NAD-capped RNA. The NAD-cap is present at the 5'-end of some RNAs and snoRNAs. In contrast to the canonical 5'-end N7 methylguanosine (m7G) cap, the NAD cap promotes mRNA decay. Also acts as a non-canonical decapping enzyme that removes the entire cap structure of m7G capped or incompletely capped RNAs. Has decapping activity toward incomplete 5'-end m7G cap mRNAs such as unmethylated 5'-end-capped RNA (cap0), while it has no activity toward 2'-O-ribose methylated m7G cap (cap1). Also has 5'-3' exonuclease activity. The sequence is that of Decapping and exoribonuclease protein 1 (DXO1) from Saccharomyces cerevisiae (strain ATCC 204508 / S288c) (Baker's yeast).